A 375-amino-acid chain; its full sequence is 23S rRNA (uracil(747)-C(5))-methyltransferase RlmC (375 aa).

[4Fe-4S] cluster is bound by residues C3, C11, C14, and C87. Q212, F241, E262, and N307 together coordinate S-adenosyl-L-methionine. Catalysis depends on C334, which acts as the Nucleophile.

This sequence belongs to the class I-like SAM-binding methyltransferase superfamily. RNA M5U methyltransferase family. RlmC subfamily.

The enzyme catalyses uridine(747) in 23S rRNA + S-adenosyl-L-methionine = 5-methyluridine(747) in 23S rRNA + S-adenosyl-L-homocysteine + H(+). Functionally, catalyzes the formation of 5-methyl-uridine at position 747 (m5U747) in 23S rRNA. The protein is 23S rRNA (uracil(747)-C(5))-methyltransferase RlmC of Escherichia coli O17:K52:H18 (strain UMN026 / ExPEC).